Here is a 348-residue protein sequence, read N- to C-terminus: Anthranilate phosphoribosyltransferase (348 aa).

5-phospho-alpha-D-ribose 1-diphosphate-binding positions include Gly91, 94–95 (GD), Thr99, 101–104 (NIST), 119–127 (KHGNRSASG), and Ser131. An anthranilate-binding site is contributed by Gly91. Ser103 provides a ligand contact to Mg(2+). An anthranilate-binding site is contributed by Asn122. Residue Arg177 coordinates anthranilate. Mg(2+) is bound by residues Asp236 and Glu237.

Belongs to the anthranilate phosphoribosyltransferase family. As to quaternary structure, homodimer. Mg(2+) is required as a cofactor.

The catalysed reaction is N-(5-phospho-beta-D-ribosyl)anthranilate + diphosphate = 5-phospho-alpha-D-ribose 1-diphosphate + anthranilate. The protein operates within amino-acid biosynthesis; L-tryptophan biosynthesis; L-tryptophan from chorismate: step 2/5. In terms of biological role, catalyzes the transfer of the phosphoribosyl group of 5-phosphorylribose-1-pyrophosphate (PRPP) to anthranilate to yield N-(5'-phosphoribosyl)-anthranilate (PRA). The protein is Anthranilate phosphoribosyltransferase of Synechococcus elongatus (strain ATCC 33912 / PCC 7942 / FACHB-805) (Anacystis nidulans R2).